Here is a 123-residue protein sequence, read N- to C-terminus: Small ribosomal subunit protein uS12 (123 aa).

The disordered stretch occupies residues 1–22 (MATINQLVRKPRKRKAKTSDVR). 3-methylthioaspartic acid is present on Asp-89. Residues 101-123 (ALDTSGVNDRKRGRSKYGTKRPK) form a disordered region. The segment covering 111-123 (KRGRSKYGTKRPK) has biased composition (basic residues).

This sequence belongs to the universal ribosomal protein uS12 family. In terms of assembly, part of the 30S ribosomal subunit. Contacts proteins S8 and S17. May interact with IF1 in the 30S initiation complex.

In terms of biological role, with S4 and S5 plays an important role in translational accuracy. Functionally, interacts with and stabilizes bases of the 16S rRNA that are involved in tRNA selection in the A site and with the mRNA backbone. Located at the interface of the 30S and 50S subunits, it traverses the body of the 30S subunit contacting proteins on the other side and probably holding the rRNA structure together. The combined cluster of proteins S8, S12 and S17 appears to hold together the shoulder and platform of the 30S subunit. The chain is Small ribosomal subunit protein uS12 from Teredinibacter turnerae (strain ATCC 39867 / T7901).